The sequence spans 306 residues: Recombination-associated protein RdgC (306 aa).

It belongs to the RdgC family.

Its subcellular location is the cytoplasm. The protein resides in the nucleoid. May be involved in recombination. The polypeptide is Recombination-associated protein RdgC (Pseudomonas aeruginosa (strain ATCC 15692 / DSM 22644 / CIP 104116 / JCM 14847 / LMG 12228 / 1C / PRS 101 / PAO1)).